The sequence spans 722 residues: Polyribonucleotide nucleotidyltransferase (722 aa).

Mg(2+)-binding residues include Asp-495 and Asp-501. The region spanning 562-621 (PRLLSFRIDPELIGTVIGPGGRTIKGITERTNTKIDIEDGGIVTIASHDGAAAEEAQRII) is the KH domain. Residues 631–699 (GEIFPGSITR…NRGRINLTLR (69 aa)) enclose the S1 motif domain. The tract at residues 700–722 (GVSQNGGMSNYPEPTPTPVAPLT) is disordered. The span at 712-722 (EPTPTPVAPLT) shows a compositional bias: pro residues.

It belongs to the polyribonucleotide nucleotidyltransferase family. Mg(2+) is required as a cofactor.

Its subcellular location is the cytoplasm. It catalyses the reaction RNA(n+1) + phosphate = RNA(n) + a ribonucleoside 5'-diphosphate. Functionally, involved in mRNA degradation. Catalyzes the phosphorolysis of single-stranded polyribonucleotides processively in the 3'- to 5'-direction. In Prochlorococcus marinus (strain NATL1A), this protein is Polyribonucleotide nucleotidyltransferase.